Reading from the N-terminus, the 411-residue chain is MAESAFPSAQQPLRVGTKDDKAAAFQKISEEDEYEVTSPTDPTFRSANAAAASSSTGSPFFGGSYGENSGPIRFNRSPFDNGPREEDEEGADEFPPEDIRPTGAANQGFPNNYALGRRTSVSAESLNPTSAGSDSWTPPYHEKTEEQLSRLKTAVSSNFLFSHLDDDQFKSVLDALVEKPIPAKGIKVISQGDAGDYFYIVENGHFDFMIHPSGSVQPGPDGMGNKVGSVGPGGSFGELALMYNAPRAATVVSVDPKSTLWALDRITFRRILMDSAFQRRRMYEAFLEEVPLLSSLKPYERAKIADALDAIKYPAGSTIIAEGDPGDAFYLLESGEADAFKNGVEGPVKSYKRGDYFGELALLDDKPRAASIVAKTDVKVAKLGRDGFKRLLGPVEDIMRRAEYESNPVPA.

Residues 1 to 144 form a disordered region; that stretch reads MAESAFPSAQ…SWTPPYHEKT (144 aa). The dimerization and phosphorylation stretch occupies residues 23-159; the sequence is AAFQKISEED…RLKTAVSSNF (137 aa). Residues 46–58 show a composition bias toward low complexity; it reads SANAAAASSSTGS. Over residues 85 to 96 the composition is skewed to acidic residues; the sequence is EEDEEGADEFPP. A compositionally biased stretch (polar residues) spans 119 to 136; that stretch reads TSVSAESLNPTSAGSDSW. S120 carries the post-translational modification Phosphoserine. Residues 160–289, E238, R247, 292–411, E359, and R368 each bind 3',5'-cyclic AMP; these read LFSH…FLEE and LLSS…PVPA.

The protein belongs to the cAMP-dependent kinase regulatory chain family. Tetramer, composed of 2 regulatory (R) and 2 catalytic (C) subunits. In the presence of cAMP it dissociates into 2 active monomeric C subunits and an R dimer.

The sequence is that of cAMP-dependent protein kinase regulatory subunit (pkaR) from Aspergillus niger.